Consider the following 475-residue polypeptide: uncharacterized protein (475 aa).

To E.coli YihN.

This is an uncharacterized protein from Mycoplasma pneumoniae (strain ATCC 29342 / M129 / Subtype 1) (Mycoplasmoides pneumoniae).